Reading from the N-terminus, the 210-residue chain is Protein SgcE (210 aa).

Substrate is bound at residue S6. A divalent metal cation contacts are provided by H31, D33, and H64. Residue D33 is the Proton acceptor of the active site. Substrate-binding positions include H64, 140–143 (DGQG), 169–171 (DGG), and 191–192 (GR). D169 lines the a divalent metal cation pocket. Residue D169 is the Proton donor of the active site.

It belongs to the ribulose-phosphate 3-epimerase family. It depends on Co(2+) as a cofactor. Fe(2+) is required as a cofactor. Requires Mn(2+) as cofactor. The cofactor is Zn(2+).

It functions in the pathway carbohydrate degradation. Functionally, probable pentose-5-phosphate 3-epimerase. The protein is Protein SgcE (sgcE) of Escherichia coli (strain K12).